The chain runs to 58 residues: Small ribosomal subunit protein bS21B (58 aa).

Belongs to the bacterial ribosomal protein bS21 family.

This Nostoc sp. (strain PCC 7120 / SAG 25.82 / UTEX 2576) protein is Small ribosomal subunit protein bS21B (rpsU2).